The following is a 332-amino-acid chain: Glycerol-3-phosphate dehydrogenase [NAD(P)+] (332 aa).

Residues Ser-11, Phe-12, Arg-32, and Lys-106 each contribute to the NADPH site. Sn-glycerol 3-phosphate is bound by residues Lys-106, Gly-134, and Ser-136. Ala-138 is an NADPH binding site. Residues Lys-189, Asp-242, Ser-252, Arg-253, and Asn-254 each coordinate sn-glycerol 3-phosphate. The active-site Proton acceptor is the Lys-189. Arg-253 provides a ligand contact to NADPH. The NADPH site is built by Val-277 and Glu-279.

Belongs to the NAD-dependent glycerol-3-phosphate dehydrogenase family.

It is found in the cytoplasm. The enzyme catalyses sn-glycerol 3-phosphate + NAD(+) = dihydroxyacetone phosphate + NADH + H(+). It catalyses the reaction sn-glycerol 3-phosphate + NADP(+) = dihydroxyacetone phosphate + NADPH + H(+). The protein operates within membrane lipid metabolism; glycerophospholipid metabolism. Functionally, catalyzes the reduction of the glycolytic intermediate dihydroxyacetone phosphate (DHAP) to sn-glycerol 3-phosphate (G3P), the key precursor for phospholipid synthesis. This Clostridium acetobutylicum (strain ATCC 824 / DSM 792 / JCM 1419 / IAM 19013 / LMG 5710 / NBRC 13948 / NRRL B-527 / VKM B-1787 / 2291 / W) protein is Glycerol-3-phosphate dehydrogenase [NAD(P)+].